Consider the following 429-residue polypeptide: MERKQAEYSNLDERYAIQGEKYQGQQYSHIYFTRLHHMRNLLHALVPSWKPHLPVTTVLGLEEGKDCIIVGTLYKHMKLKPSILDEYSKERSAIPLVKPHNFMHPDDHLILEDESGRVTLAGAIPPAAYVTGVVIALHGKETSAGNFLVEDILEAGIPPQITLPSINEDKYVVFVSGLSIGSEKFNPLQFQLLIDHITGHLGDENEQSIASNIVRVVVAGNSVHISPRFFNGQAVASKDQSRIAEPIKELDIMLTQLVASLPVDMMPGSNDPANFSLPQQPLHRCLFAGAATYNTFSSCSNPHQFELDSVRFIGTSGQNIDDLYKYSDAKDKLEFVERTLRWRHLAPTAPNSLGCYPYTDKDPFLVESCPHVYFVGNQDKYETQLLQGLEKQKVRLICIPRFCDSGVAVMLNLRNLECSTLSFSTSFDA.

The protein belongs to the DNA polymerase delta/II small subunit family. As to quaternary structure, heterodimer with subunits of 125 kDa and 50 kDa.

It localises to the nucleus. It carries out the reaction DNA(n) + a 2'-deoxyribonucleoside 5'-triphosphate = DNA(n+1) + diphosphate. Its function is as follows. The function of the small subunit is not yet clear. This Oryza sativa subsp. japonica (Rice) protein is DNA polymerase delta small subunit (POLD2).